Reading from the N-terminus, the 799-residue chain is Zinc finger protein 227 (799 aa).

One can recognise a KRAB domain in the interval 23 to 94 (VTFKDVAVVF…ETETQRSSKH (72 aa)). 19 C2H2-type zinc fingers span residues 250–272 (HPCGECGRGFSYSPRLPLHPNVH), 269–291 (PNVHTGEKCFSQSSHLRTHQRIH), 324–346 (YRCDSCGKGFSSSTGLIIHYRTH), 352–374 (YKCEECGKCFSQSSNFQCHQRVH), 380–402 (YKCEECGKGFGWSVNLRVHQRVH), 408–430 (YKCEECGKGFTQAAHFHIHQRVH), 436–458 (YKCDVCGKGFSHNSPLICHRRVH), 464–486 (YKCEACGKGFTRNTDLHIHFRVH), 492–514 (YKCKECGKGFSQASNLQVHQNVH), 520–542 (FKCETCGKGFSQSSKLQTHQRVH), 548–570 (YRCDVCGKDFSYSSNLKLHQVIH), 576–598 (YKCEECGKGFSWRSNLHAHQRVH), 604–626 (YKCEQCDKSFSQAIDFRVHQRVH), 632–654 (YKCGVCGKGFSQSSGLQSHQRVH), 660–682 (YKCDVCGKGFRYSSQFIYHQRGH), 688–710 (YKCEECGKGFGRSLNLRHHQRVH), 716–738 (HICEECGKAFSLPSNLRVHLGVH), 744–766 (FKCEECGKGFSQSARLEAHQRVH), and 772–794 (YKCDICDKDFRHRSRLTYHQKVH).

The protein belongs to the krueppel C2H2-type zinc-finger protein family.

Its subcellular location is the nucleus. In terms of biological role, may be involved in transcriptional regulation. This is Zinc finger protein 227 (ZNF227) from Homo sapiens (Human).